The sequence spans 347 residues: NADH-ubiquinone oxidoreductase chain 2 (347 aa).

The next 11 membrane-spanning stretches (helical) occupy residues 3-23, 25-45, 67-87, 96-116, 122-142, 145-165, 178-198, 200-220, 239-259, 274-294, and 325-345; these read PIIF…VMIS, HWLL…PIMM, SMLL…WTVM, MLMT…FWVP, IPLS…MSVL, IFPS…ILIG, IMAY…PYNP, MTLL…TMFM, IMTV…PLSG, NSII…YFYM, and FLPT…MLSV.

Belongs to the complex I subunit 2 family. In terms of assembly, core subunit of respiratory chain NADH dehydrogenase (Complex I) which is composed of 45 different subunits. Interacts with TMEM242.

The protein localises to the mitochondrion inner membrane. It carries out the reaction a ubiquinone + NADH + 5 H(+)(in) = a ubiquinol + NAD(+) + 4 H(+)(out). Core subunit of the mitochondrial membrane respiratory chain NADH dehydrogenase (Complex I) which catalyzes electron transfer from NADH through the respiratory chain, using ubiquinone as an electron acceptor. Essential for the catalytic activity and assembly of complex I. This Bos indicus (Zebu) protein is NADH-ubiquinone oxidoreductase chain 2.